Consider the following 194-residue polypeptide: Inosine triphosphate pyrophosphatase (194 aa).

8 to 13 (TGNANK) serves as a coordination point for ITP. Glu-47 provides a ligand contact to Mg(2+). ITP-binding positions include Lys-59, 75-76 (DT), Lys-92, 151-154 (FGWD), Lys-174, and 179-180 (HR).

It belongs to the HAM1 NTPase family. In terms of assembly, homodimer. It depends on Mg(2+) as a cofactor. Mn(2+) serves as cofactor.

The protein resides in the cytoplasm. The protein localises to the nucleus. It carries out the reaction ITP + H2O = IMP + diphosphate + H(+). The enzyme catalyses dITP + H2O = dIMP + diphosphate + H(+). The catalysed reaction is XTP + H2O = XMP + diphosphate + H(+). Its function is as follows. Pyrophosphatase that hydrolyzes non-canonical purine nucleotides such as inosine triphosphate (ITP), deoxyinosine triphosphate (dITP) or xanthosine 5'-triphosphate (XTP) to their respective monophosphate derivatives. The enzyme does not distinguish between the deoxy- and ribose forms. Probably excludes non-canonical purines from RNA and DNA precursor pools, thus preventing their incorporation into RNA and DNA and avoiding chromosomal lesions. The polypeptide is Inosine triphosphate pyrophosphatase (Scheffersomyces stipitis (strain ATCC 58785 / CBS 6054 / NBRC 10063 / NRRL Y-11545) (Yeast)).